Consider the following 272-residue polypeptide: Dermonecrotic toxin LvSicTox-alphaIC1bv (272 aa).

Histidine 5 is an active-site residue. 2 residues coordinate Mg(2+): glutamate 25 and aspartate 27. Histidine 41 serves as the catalytic Nucleophile. 2 cysteine pairs are disulfide-bonded: cysteine 45/cysteine 51 and cysteine 47/cysteine 189. Mg(2+) is bound at residue aspartate 84.

The protein belongs to the arthropod phospholipase D family. Class II subfamily. Mg(2+) is required as a cofactor. In terms of tissue distribution, expressed by the venom gland.

It localises to the secreted. It catalyses the reaction an N-(acyl)-sphingosylphosphocholine = an N-(acyl)-sphingosyl-1,3-cyclic phosphate + choline. The catalysed reaction is an N-(acyl)-sphingosylphosphoethanolamine = an N-(acyl)-sphingosyl-1,3-cyclic phosphate + ethanolamine. It carries out the reaction a 1-acyl-sn-glycero-3-phosphocholine = a 1-acyl-sn-glycero-2,3-cyclic phosphate + choline. The enzyme catalyses a 1-acyl-sn-glycero-3-phosphoethanolamine = a 1-acyl-sn-glycero-2,3-cyclic phosphate + ethanolamine. In terms of biological role, dermonecrotic toxins cleave the phosphodiester linkage between the phosphate and headgroup of certain phospholipids (sphingolipid and lysolipid substrates), forming an alcohol (often choline) and a cyclic phosphate. This toxin acts on sphingomyelin (SM). It may also act on ceramide phosphoethanolamine (CPE), lysophosphatidylcholine (LPC) and lysophosphatidylethanolamine (LPE), but not on lysophosphatidylserine (LPS), and lysophosphatidylglycerol (LPG). It acts by transphosphatidylation, releasing exclusively cyclic phosphate products as second products. Induces dermonecrosis, hemolysis, increased vascular permeability, edema, inflammatory response, and platelet aggregation. This is Dermonecrotic toxin LvSicTox-alphaIC1bv from Loxosceles variegata (Recluse spider).